Consider the following 126-residue polypeptide: Large ribosomal subunit protein bL12 (126 aa).

It belongs to the bacterial ribosomal protein bL12 family. Homodimer. Part of the ribosomal stalk of the 50S ribosomal subunit. Forms a multimeric L10(L12)X complex, where L10 forms an elongated spine to which 2 to 4 L12 dimers bind in a sequential fashion. Binds GTP-bound translation factors.

Its function is as follows. Forms part of the ribosomal stalk which helps the ribosome interact with GTP-bound translation factors. Is thus essential for accurate translation. The protein is Large ribosomal subunit protein bL12 of Methylocella silvestris (strain DSM 15510 / CIP 108128 / LMG 27833 / NCIMB 13906 / BL2).